A 308-amino-acid polypeptide reads, in one-letter code: Glutaminase (308 aa).

Positions 66, 117, 161, 168, 192, 244, and 262 each coordinate substrate.

This sequence belongs to the glutaminase family. As to quaternary structure, homotetramer.

The enzyme catalyses L-glutamine + H2O = L-glutamate + NH4(+). The chain is Glutaminase from Klebsiella pneumoniae subsp. pneumoniae (strain ATCC 700721 / MGH 78578).